We begin with the raw amino-acid sequence, 310 residues long: 4-hydroxythreonine-4-phosphate dehydrogenase (310 aa).

2 residues coordinate substrate: H126 and T127. A divalent metal cation contacts are provided by H156, H195, and H251. Residues K259, N268, and R277 each contribute to the substrate site.

The protein belongs to the PdxA family. Homodimer. Requires Zn(2+) as cofactor. The cofactor is Mg(2+). Co(2+) serves as cofactor.

Its subcellular location is the cytoplasm. It catalyses the reaction 4-(phosphooxy)-L-threonine + NAD(+) = 3-amino-2-oxopropyl phosphate + CO2 + NADH. Its pathway is cofactor biosynthesis; pyridoxine 5'-phosphate biosynthesis; pyridoxine 5'-phosphate from D-erythrose 4-phosphate: step 4/5. Functionally, catalyzes the NAD(P)-dependent oxidation of 4-(phosphooxy)-L-threonine (HTP) into 2-amino-3-oxo-4-(phosphooxy)butyric acid which spontaneously decarboxylates to form 3-amino-2-oxopropyl phosphate (AHAP). The sequence is that of 4-hydroxythreonine-4-phosphate dehydrogenase from Helicobacter acinonychis (strain Sheeba).